A 424-amino-acid chain; its full sequence is MEFKQGDRVRIEKNGTVYEGKVMPSMEGYITIKMNSGYNAGFSMDKVKITLLENNGENTNGGLNGGKEHKTAGEEVQKSGKKLPKVAILSTGGTIASKIDYRTGAVTSQFTADDILAAIPELREIADFKGRVISSILSENMDSESWQNLARAIVEEIEAGADGVIVTHGTDTMMYTAAALSFMIETPVPIVIVGSQRSADRPSSDNAMNAICAALVAISDIAEVSVVMHGTTSDDFCEIHRGTKVRKMHTSRRDAFKSINSRPIGIVDYNTRKIKTFIDYIKRGERPLKFNPGMEPKCALVKFTPGSGPEILDHYIDSGYRGLVLEGTGLGHVSTKWIPKIQKATDAKMPVIVTSQCLNGRICDRVYDTGRDMLKAGAIEGEDTLPEIALVKLMWVLGQTDEFNEAVKMLREDISGEITKCCFK.

A disordered region spans residues 58–79; that stretch reads NTNGGLNGGKEHKTAGEEVQKS. Residues 66 to 78 show a composition bias toward basic and acidic residues; that stretch reads GKEHKTAGEEVQK. The 323-residue stretch at 84-406 folds into the Asparaginase/glutaminase domain; that stretch reads PKVAILSTGG…LGQTDEFNEA (323 aa). Residues Thr94, Thr170, Asp171, and Lys247 contribute to the active site.

It belongs to the asparaginase 1 family. GatD subfamily. Heterodimer of GatD and GatE.

The enzyme catalyses L-glutamyl-tRNA(Gln) + L-glutamine + ATP + H2O = L-glutaminyl-tRNA(Gln) + L-glutamate + ADP + phosphate + H(+). Its function is as follows. Allows the formation of correctly charged Gln-tRNA(Gln) through the transamidation of misacylated Glu-tRNA(Gln) in organisms which lack glutaminyl-tRNA synthetase. The reaction takes place in the presence of glutamine and ATP through an activated gamma-phospho-Glu-tRNA(Gln). The GatDE system is specific for glutamate and does not act on aspartate. The polypeptide is Glutamyl-tRNA(Gln) amidotransferase subunit D (Methanosarcina barkeri (strain Fusaro / DSM 804)).